The sequence spans 591 residues: Metalloendopeptidase OPG085 (591 aa).

His-41 is a binding site for Zn(2+). Glu-44 is a catalytic residue. The Zn(2+) site is built by His-45 and Glu-112.

This sequence belongs to the peptidase M44 family. Zn(2+) is required as a cofactor. Post-translationally, undergoes proteolytic processing during the course of infection. May be cleaved into 46 kDa and 22 kDa products (Potential).

Its subcellular location is the virion. Its function is as follows. Probably involved in maturation of some viral proteins by processing them preferentially at Ala-Gly-|-Ser/Thr/Lys motifs. Does not seem to be responsible for the cleavage of major core proteins. This Variola virus (isolate Human/India/Ind3/1967) (VARV) protein is Metalloendopeptidase OPG085 (OPG085).